The sequence spans 799 residues: Potassium transporter 21 (799 aa).

Over 1-56 (MDPGVEKKKQQMELVDVESGGLPVERQDSLFREAVRAEHAGAAHWDEQDSWGRTMS) the chain is Cytoplasmic. Residues 57–77 (LAFQCVGILYGDIGTSSLYVY) traverse the membrane as a helical segment. Topologically, residues 78 to 93 (SSTFEHGIGHPDDVVG) are extracellular. The chain crosses the membrane as a helical span at residues 94–114 (VLSLIVYSFMLFTVIKIVFVA). Topologically, residues 115–181 (LHANDHGDGG…QLLEASKAAK (67 aa)) are cytoplasmic. Residues 182–202 (ISLFLLTILAIAMVISDAVLT) traverse the membrane as a helical segment. Over 203-219 (PPISVLSAVGGLREKVP) the chain is Extracellular. A helical transmembrane segment spans residues 220-240 (HLTTDQIVWITVAILVVLFAI). At 241–251 (QRYGTDKVGYS) the chain is on the cytoplasmic side. Residues 252-272 (FAPIILLWLLLIGATGLYNLI) form a helical membrane-spanning segment. Residues 273–301 (KHDISVLRAFNPKYIIDYFRRNKKEGWVS) are Extracellular-facing. A helical transmembrane segment spans residues 302-322 (LGSILLCFTGSEALFANLGYF). Residues 323–328 (SIRSIQ) are Cytoplasmic-facing. The chain crosses the membrane as a helical span at residues 329 to 349 (LSFSFALLPSVLLTYIGQAAF). Over 350–362 (LSKNPKNVANTFF) the chain is Extracellular. Residues 363–383 (AATPISLFWPTFIMAIAASII) traverse the membrane as a helical segment. The Cytoplasmic segment spans residues 384–420 (GSQAMISCAFATVSHLQSLSCFPRVKILHTSKRFPGQ). A helical membrane pass occupies residues 421 to 441 (LYIPGVNFLLCVAACVVTVSF). At 442-452 (KTTVIIGKAHE) the chain is on the extracellular side. A helical transmembrane segment spans residues 453–473 (ICVILVMIITTLLMTIVMLLV). Residues 474-475 (WK) are Cytoplasmic-facing. Residues 476-496 (INILWVALFFITFTSTEAVYL) form a helical membrane-spanning segment. The Extracellular segment spans residues 497-508 (SSVLYKFTHGPY). Residues 509-529 (VPVAMSVVLMVVMIVWHYVHV) traverse the membrane as a helical segment. Topologically, residues 530 to 799 (KRYKYELEHT…LLKVGISYEI (270 aa)) are cytoplasmic.

It belongs to the HAK/KUP transporter (TC 2.A.72.3) family.

It is found in the membrane. In terms of biological role, high-affinity potassium transporter. In Oryza sativa subsp. japonica (Rice), this protein is Potassium transporter 21 (HAK21).